A 334-amino-acid polypeptide reads, in one-letter code: MGMKKNRPRRGSLAFSPRKRAKKLVPKIRSWPADKKVGLQAFPVYKAGTTHALLIENNPKSPNSSQEVFTPVTVLETPDVTVAGIRLYEKTTKGLKALTEVWAEQLDSDLGRKLTLAKKEEKKTVDALDAVLEKATEVRAIVHTNPKTTGIPKKKPEVVEIRIGGSSVAERLAYAKEILGKTLAISDVFEAGEIIDTLAITKGKGFQGSVKRWGIKVQFGKHQRKGVGRHTGSIGPWRPRRVMWTVPLPGQMGFHQRTEYNKRILKLGSEGAEITPKGGFLNYGAVKNGYVVVKGTVQGPAKRLVVLRGSVRAAEDKFGLPEIAYISTESKQGN.

The segment covering 1 to 10 (MGMKKNRPRR) has biased composition (basic residues). Residues 1-21 (MGMKKNRPRRGSLAFSPRKRA) are disordered.

This sequence belongs to the universal ribosomal protein uL3 family. Part of the 50S ribosomal subunit. Forms a cluster with proteins L14 and L24e.

Functionally, one of the primary rRNA binding proteins, it binds directly near the 3'-end of the 23S rRNA, where it nucleates assembly of the 50S subunit. This Methanococcus maripaludis (strain DSM 14266 / JCM 13030 / NBRC 101832 / S2 / LL) protein is Large ribosomal subunit protein uL3.